The primary structure comprises 173 residues: Flagellar assembly factor FliW (173 aa).

Residues 152-173 (STTVRRKASPPAAGEDKGDVQE) are disordered.

This sequence belongs to the FliW family. As to quaternary structure, interacts with translational regulator CsrA and flagellin(s).

It localises to the cytoplasm. Acts as an anti-CsrA protein, binds CsrA and prevents it from repressing translation of its target genes, one of which is flagellin. Binds to flagellin and participates in the assembly of the flagellum. The polypeptide is Flagellar assembly factor FliW (Nitratidesulfovibrio vulgaris (strain ATCC 29579 / DSM 644 / CCUG 34227 / NCIMB 8303 / VKM B-1760 / Hildenborough) (Desulfovibrio vulgaris)).